The following is a 148-amino-acid chain: Large ribosomal subunit protein uL15 (148 aa).

Residues 1 to 12 (MSEPIKLHDLRP) are compositionally biased toward basic and acidic residues. Positions 1 to 52 (MSEPIKLHDLRPAKGANKPKTRVGRGEASKGKTAGRGTKGTKARKQVSAAFE) are disordered.

Belongs to the universal ribosomal protein uL15 family. Part of the 50S ribosomal subunit.

Functionally, binds to the 23S rRNA. This Corynebacterium diphtheriae (strain ATCC 700971 / NCTC 13129 / Biotype gravis) protein is Large ribosomal subunit protein uL15.